The chain runs to 250 residues: Transcriptional activator protein ExpR (250 aa).

One can recognise an HTH luxR-type domain in the interval 173–238 (KSQEADLFSQ…HAIRLGVEMN (66 aa)). Residues 197-216 (YQEIALILGITTSTVKFHIG) constitute a DNA-binding region (H-T-H motif).

The protein belongs to the autoinducer-regulated transcriptional regulatory protein family.

Functions as an OHLL responsive transcriptional regulator that acts in virulence (soft rot disease) through the activation of genes for plant tissue macerating enzymes. The protein is Transcriptional activator protein ExpR (expR) of Dickeya dadantii (strain 3937) (Erwinia chrysanthemi (strain 3937)).